A 104-amino-acid polypeptide reads, in one-letter code: Iron-sulfur cluster assembly protein CyaY (104 aa).

Belongs to the frataxin family.

Functionally, involved in iron-sulfur (Fe-S) cluster assembly. May act as a regulator of Fe-S biogenesis. This Tolumonas auensis (strain DSM 9187 / NBRC 110442 / TA 4) protein is Iron-sulfur cluster assembly protein CyaY.